The primary structure comprises 138 residues: Large ribosomal subunit protein bL19 (138 aa).

Belongs to the bacterial ribosomal protein bL19 family.

Functionally, this protein is located at the 30S-50S ribosomal subunit interface and may play a role in the structure and function of the aminoacyl-tRNA binding site. The sequence is that of Large ribosomal subunit protein bL19 from Rickettsia conorii (strain ATCC VR-613 / Malish 7).